The chain runs to 372 residues: 4-hydroxy-3-methylbut-2-en-1-yl diphosphate synthase (flavodoxin) (372 aa).

Positions 270, 273, 305, and 312 each coordinate [4Fe-4S] cluster.

The protein belongs to the IspG family. Requires [4Fe-4S] cluster as cofactor.

The catalysed reaction is (2E)-4-hydroxy-3-methylbut-2-enyl diphosphate + oxidized [flavodoxin] + H2O + 2 H(+) = 2-C-methyl-D-erythritol 2,4-cyclic diphosphate + reduced [flavodoxin]. It participates in isoprenoid biosynthesis; isopentenyl diphosphate biosynthesis via DXP pathway; isopentenyl diphosphate from 1-deoxy-D-xylulose 5-phosphate: step 5/6. Its function is as follows. Converts 2C-methyl-D-erythritol 2,4-cyclodiphosphate (ME-2,4cPP) into 1-hydroxy-2-methyl-2-(E)-butenyl 4-diphosphate. The sequence is that of 4-hydroxy-3-methylbut-2-en-1-yl diphosphate synthase (flavodoxin) from Alteromonas mediterranea (strain DSM 17117 / CIP 110805 / LMG 28347 / Deep ecotype).